Consider the following 656-residue polypeptide: PAN2-PAN3 deadenylation complex subunit pan3 (656 aa).

Disordered stretches follow at residues 1-24 (MAAT…KNRD) and 75-117 (SFTP…QQAN). Residues 24–53 (DTKETLCRNVVIYGHCRWEDSGCTFNHDQN) form a C3H1-type zinc finger. The PABPC-interacting motif-2 (PAM-2) motif lies at 63 to 83 (NSNRRVFNVESPSFTPANQQQ). 2 stretches are compositionally biased toward polar residues: residues 75–96 (SFTP…SQAA) and 107–117 (GTSTPTLQQAN). The pseudokinase domain stretch occupies residues 251–514 (QLLPNSGLPN…TVETLLGGIT (264 aa)). Residues 275–280 (TRNSTC), arginine 302, 352–359 (DFHPLSET), and 412–413 (SK) each bind ATP. A coiled-coil region spans residues 515–553 (THLANFANFVMQESDEKEFHLMRELENGRIARLMFKLSV). The tract at residues 554-656 (VNERGDSCGV…SKPSATGATI (103 aa)) is knob domain.

It belongs to the protein kinase superfamily. PAN3 family. In terms of assembly, homodimer. Forms a heterotrimer with a catalytic subunit par-1/pan2 to form the poly(A)-nuclease (PAN) deadenylation complex. Interacts (via PAM-2 motif) with poly(A)-binding protein pabp-1 (via PABC domain), conferring substrate specificity of the enzyme complex.

Its subcellular location is the cytoplasm. Regulatory subunit of the poly(A)-nuclease (PAN) deadenylation complex, one of two cytoplasmic mRNA deadenylases involved in mRNA turnover. PAN specifically shortens poly(A) tails of RNA and the activity is stimulated by poly(A)-binding protein pabp-1. PAN deadenylation is followed by rapid degradation of the shortened mRNA tails by the CCR4-NOT complex. Deadenylated mRNAs are then degraded by two alternative mechanisms, namely exosome-mediated 3'-5' exonucleolytic degradation, or deadenylation-dependent mRNA decaping and subsequent 5'-3' exonucleolytic degradation by rgb-30/xrn1. May also be involved in post-transcriptional maturation of mRNA poly(A) tails. par-2/pan3 acts as a positive regulator for PAN activity, recruiting the catalytic subunit par-1/pan2 to mRNA via its interaction with RNA and with pabp-1. The protein is PAN2-PAN3 deadenylation complex subunit pan3 (par-2) of Neurospora crassa (strain ATCC 24698 / 74-OR23-1A / CBS 708.71 / DSM 1257 / FGSC 987).